We begin with the raw amino-acid sequence, 293 residues long: tRNA pseudouridine synthase B (293 aa).

Asp-38 acts as the Nucleophile in catalysis.

This sequence belongs to the pseudouridine synthase TruB family. Type 1 subfamily.

The enzyme catalyses uridine(55) in tRNA = pseudouridine(55) in tRNA. Responsible for synthesis of pseudouridine from uracil-55 in the psi GC loop of transfer RNAs. The chain is tRNA pseudouridine synthase B from Solibacter usitatus (strain Ellin6076).